A 177-amino-acid polypeptide reads, in one-letter code: MNGGHIQLIIGPMFSGKSTELIRRVRRYQIAQYKCVTIKYSNDNRYGTGLWTHDKNNFEALEATKLCDVLESITDFSVIGIDEGQFFPDIVEFCERMANEGKIVIVAALDGTFQRKPFNNILNLIPLSEMVVKLTAVCMKCFKEASFSKRLGEETEIEIIGGNDMYQSVCRKCYVGS.

11-18 (GPMFSGKS) serves as a coordination point for ATP. Catalysis depends on glutamate 83, which acts as the Proton acceptor. Substrate is bound at residue phenylalanine 113. Zn(2+) is bound by residues cysteine 138 and cysteine 141. 157-161 (IEIIG) contacts substrate. Residues cysteine 170 and cysteine 173 each coordinate Zn(2+).

It belongs to the thymidine kinase family. In terms of assembly, homotetramer. Two molecules of substrate bind to each enzyme tetramer.

The enzyme catalyses thymidine + ATP = dTMP + ADP + H(+). Phosphorylates thymidine and thymidine analogs, such as azidothymidine (AZT). Part of the salvage pathway for pyrimidine deoxyribonucleotide synthesis. The polypeptide is Thymidine kinase (OPG101) (Homo sapiens (Human)).